We begin with the raw amino-acid sequence, 1486 residues long: Alsin homolog (1486 aa).

3 RCC1 repeats span residues 147–201 (QGVV…MLVA), 256–307 (HTQL…ARTL), and 308–363 (DGRL…LLNA). 6 MORN repeats span residues 744–765 (CGTWRKGVLHGNCYLEYPDGSV), 766–784 (YCGELQHGIIEGFGKMVIP), 789–804 (YVGNFKGGRFHGHGVY), 817–832 (YEGNFCEGLFHGHGVM), 839–853 (YVGEYQANARSGYGV), and 863–884 (YMGMFADNKRSGIGSCITNRGD). The VPS9 domain maps to 1333 to 1486 (SRKDEMYRQN…VTSRALQKIP (154 aa)).

As to expression, in the embryo, expressed in a wide range of tissues including the epidermis and the ventral nerve cord.

Functionally, has guanine nucleotide exchange factor (GEF) activity towards Rab5. Promotes the exchange of GDP to GTP, converting inactive GDP-bound Rab5 into its active GTP-bound form. This is Alsin homolog from Drosophila melanogaster (Fruit fly).